The sequence spans 764 residues: 5-methyltetrahydropteroyltriglutamate--homocysteine methyltransferase (764 aa).

5-methyltetrahydropteroyltri-L-glutamate is bound by residues 16-19 (RELK) and lysine 121. Residues 440–442 (IGS) and glutamate 493 contribute to the L-homocysteine site. L-methionine-binding positions include 440–442 (IGS) and glutamate 493. Residues 524-525 (RC) and tryptophan 570 contribute to the 5-methyltetrahydropteroyltri-L-glutamate site. Aspartate 608 lines the L-homocysteine pocket. Residue aspartate 608 coordinates L-methionine. Glutamate 614 provides a ligand contact to 5-methyltetrahydropteroyltri-L-glutamate. Zn(2+)-binding residues include histidine 650, cysteine 652, and glutamate 674. Residue histidine 703 is the Proton donor of the active site. Cysteine 735 contributes to the Zn(2+) binding site.

Belongs to the vitamin-B12 independent methionine synthase family. Requires Zn(2+) as cofactor.

The enzyme catalyses 5-methyltetrahydropteroyltri-L-glutamate + L-homocysteine = tetrahydropteroyltri-L-glutamate + L-methionine. Its pathway is amino-acid biosynthesis; L-methionine biosynthesis via de novo pathway; L-methionine from L-homocysteine (MetE route): step 1/1. Catalyzes the transfer of a methyl group from 5-methyltetrahydrofolate to homocysteine resulting in methionine formation. The protein is 5-methyltetrahydropteroyltriglutamate--homocysteine methyltransferase of Burkholderia cenocepacia (strain ATCC BAA-245 / DSM 16553 / LMG 16656 / NCTC 13227 / J2315 / CF5610) (Burkholderia cepacia (strain J2315)).